The sequence spans 118 residues: MPFSKLGRNKSQRRALLRTLMTDLIVQEKIMTTESKAKELQKLADKMVTLSKKNTLHTRRQAKRHLFDEKINDDTTVLQKLFKNISSKYLDRQGGYTRVIKTVPRRGDSAPMAIIAFV.

It belongs to the bacterial ribosomal protein bL17 family. As to quaternary structure, part of the 50S ribosomal subunit. Contacts protein L32.

The sequence is that of Large ribosomal subunit protein bL17 from Aster yellows witches'-broom phytoplasma (strain AYWB).